Here is a 243-residue protein sequence, read N- to C-terminus: 1-(5-phosphoribosyl)-5-[(5-phosphoribosylamino)methylideneamino] imidazole-4-carboxamide isomerase (243 aa).

Aspartate 14 functions as the Proton acceptor in the catalytic mechanism. Aspartate 135 functions as the Proton donor in the catalytic mechanism.

This sequence belongs to the HisA/HisF family.

It localises to the cytoplasm. The enzyme catalyses 1-(5-phospho-beta-D-ribosyl)-5-[(5-phospho-beta-D-ribosylamino)methylideneamino]imidazole-4-carboxamide = 5-[(5-phospho-1-deoxy-D-ribulos-1-ylimino)methylamino]-1-(5-phospho-beta-D-ribosyl)imidazole-4-carboxamide. It functions in the pathway amino-acid biosynthesis; L-histidine biosynthesis; L-histidine from 5-phospho-alpha-D-ribose 1-diphosphate: step 4/9. This Rubrobacter xylanophilus (strain DSM 9941 / JCM 11954 / NBRC 16129 / PRD-1) protein is 1-(5-phosphoribosyl)-5-[(5-phosphoribosylamino)methylideneamino] imidazole-4-carboxamide isomerase.